A 296-amino-acid polypeptide reads, in one-letter code: Glycine--tRNA ligase alpha subunit (296 aa).

Belongs to the class-II aminoacyl-tRNA synthetase family. Tetramer of two alpha and two beta subunits.

Its subcellular location is the cytoplasm. The enzyme catalyses tRNA(Gly) + glycine + ATP = glycyl-tRNA(Gly) + AMP + diphosphate. This is Glycine--tRNA ligase alpha subunit from Listeria welshimeri serovar 6b (strain ATCC 35897 / DSM 20650 / CCUG 15529 / CIP 8149 / NCTC 11857 / SLCC 5334 / V8).